The sequence spans 231 residues: 7-cyano-7-deazaguanine synthase (231 aa).

ATP is bound at residue 8–18 (FSGGQDSTTCL). The Zn(2+) site is built by Cys-188, Cys-197, Cys-200, and Cys-203.

It belongs to the QueC family. Zn(2+) is required as a cofactor.

The enzyme catalyses 7-carboxy-7-deazaguanine + NH4(+) + ATP = 7-cyano-7-deazaguanine + ADP + phosphate + H2O + H(+). The protein operates within purine metabolism; 7-cyano-7-deazaguanine biosynthesis. Its function is as follows. Catalyzes the ATP-dependent conversion of 7-carboxy-7-deazaguanine (CDG) to 7-cyano-7-deazaguanine (preQ(0)). The polypeptide is 7-cyano-7-deazaguanine synthase (Sodalis glossinidius (strain morsitans)).